A 178-amino-acid polypeptide reads, in one-letter code: Large ribosomal subunit protein uL5 (178 aa).

Belongs to the universal ribosomal protein uL5 family. As to quaternary structure, part of the 50S ribosomal subunit; contacts the 5S rRNA and probably tRNA. Forms a bridge to the 30S subunit in the 70S ribosome.

Functionally, this is one of the proteins that bind and probably mediate the attachment of the 5S RNA into the large ribosomal subunit, where it forms part of the central protuberance. In the 70S ribosome it contacts protein S13 of the 30S subunit (bridge B1b), connecting the 2 subunits; this bridge is implicated in subunit movement. May contact the P site tRNA; the 5S rRNA and some of its associated proteins might help stabilize positioning of ribosome-bound tRNAs. In Sulfolobus acidocaldarius (strain ATCC 33909 / DSM 639 / JCM 8929 / NBRC 15157 / NCIMB 11770), this protein is Large ribosomal subunit protein uL5.